Consider the following 65-residue polypeptide: Small ribosomal subunit protein bS21 (65 aa).

The tract at residues 45 to 65 (GRLKRSRSKRRAQRANEERNS) is disordered. Positions 48–57 (KRSRSKRRAQ) are enriched in basic residues.

This sequence belongs to the bacterial ribosomal protein bS21 family.

The sequence is that of Small ribosomal subunit protein bS21 from Chlorobium luteolum (strain DSM 273 / BCRC 81028 / 2530) (Pelodictyon luteolum).